We begin with the raw amino-acid sequence, 215 residues long: Cytochrome b6 (215 aa).

Residues 32 to 52 (IFYCLGGITLTCFLVQVATGF) form a helical membrane-spanning segment. Cys35 is a binding site for heme c. Heme b-binding residues include His86 and His100. 3 helical membrane-spanning segments follow: residues 90-110 (ASMMVLMMILHVFRVYLTGGF), 116-136 (LTWVTGVVLGVLTATFGVTGY), and 186-206 (LHTFVLPLLTAVFMLMHFLMI). Residues His187 and His202 each coordinate heme b.

Belongs to the cytochrome b family. PetB subfamily. The 4 large subunits of the cytochrome b6-f complex are cytochrome b6, subunit IV (17 kDa polypeptide, PetD), cytochrome f and the Rieske protein, while the 4 small subunits are PetG, PetL, PetM and PetN. The complex functions as a dimer. The cofactor is heme b. It depends on heme c as a cofactor.

The protein resides in the plastid. It is found in the chloroplast thylakoid membrane. Functionally, component of the cytochrome b6-f complex, which mediates electron transfer between photosystem II (PSII) and photosystem I (PSI), cyclic electron flow around PSI, and state transitions. The chain is Cytochrome b6 from Pisum sativum (Garden pea).